An 876-amino-acid chain; its full sequence is Alanine--tRNA ligase (876 aa).

Position 74 is an N6-acetyllysine (K74). Positions 564, 568, 666, and 670 each coordinate Zn(2+).

It belongs to the class-II aminoacyl-tRNA synthetase family. Homotetramer. The cofactor is Zn(2+).

The protein resides in the cytoplasm. The enzyme catalyses tRNA(Ala) + L-alanine + ATP = L-alanyl-tRNA(Ala) + AMP + diphosphate. In terms of biological role, catalyzes the attachment of alanine to tRNA(Ala) in a two-step reaction: alanine is first activated by ATP to form Ala-AMP and then transferred to the acceptor end of tRNA(Ala). Also edits incorrectly charged Ser-tRNA(Ala) and Gly-tRNA(Ala) via its editing domain. The polypeptide is Alanine--tRNA ligase (Shigella flexneri serotype 5b (strain 8401)).